A 262-amino-acid polypeptide reads, in one-letter code: tRNA pseudouridine synthase A (262 aa).

D52 functions as the Nucleophile in the catalytic mechanism. A substrate-binding site is contributed by Y103.

Belongs to the tRNA pseudouridine synthase TruA family.

The catalysed reaction is uridine(38/39/40) in tRNA = pseudouridine(38/39/40) in tRNA. In terms of biological role, formation of pseudouridine at positions 38, 39 and 40 in the anticodon stem and loop of transfer RNAs. This Methanococcus maripaludis (strain C6 / ATCC BAA-1332) protein is tRNA pseudouridine synthase A.